The chain runs to 435 residues: Glucoside xylosyltransferase 1 (435 aa).

Topologically, residues 1 to 6 (MRRYLR) are cytoplasmic. Residues 7–29 (VVGLCLACGFCSLLYAFSQLAVS) traverse the membrane as a helical; Signal-anchor for type II membrane protein segment. Topologically, residues 30 to 435 (LEEGAAVGRR…NRYDTPPKER (406 aa)) are lumenal. Residues asparagine 168 and asparagine 232 are each glycosylated (N-linked (GlcNAc...) asparagine).

This sequence belongs to the glycosyltransferase 8 family.

It localises to the membrane. It carries out the reaction 3-O-(beta-D-glucosyl)-L-seryl-[EGF-like domain protein] + UDP-alpha-D-xylose = 3-O-[alpha-D-xylosyl-(1-&gt;3)-beta-D-glucosyl]-L-seryl-[EGF-like domain protein] + UDP + H(+). In terms of biological role, glycosyltransferase which elongates the O-linked glucose attached to EGF-like repeats in the extracellular domain of Notch proteins by catalyzing the addition of xylose. The polypeptide is Glucoside xylosyltransferase 1 (Gxylt1) (Rattus norvegicus (Rat)).